Here is a 480-residue protein sequence, read N- to C-terminus: tRNA modification GTPase MnmE (480 aa).

Residues R20, E114, and K154 each contribute to the (6S)-5-formyl-5,6,7,8-tetrahydrofolate site. A TrmE-type G domain is found at 250–406 (GLKLAIIGPP…ILKNIENIAE (157 aa)). N260 is a binding site for K(+). GTP contacts are provided by residues 260 to 265 (NVGKSS), 279 to 285 (SNIAGTT), and 304 to 307 (DTAG). Residue S264 participates in Mg(2+) binding. Residues S279, I281, and T284 each coordinate K(+). T285 is a binding site for Mg(2+). K480 lines the (6S)-5-formyl-5,6,7,8-tetrahydrofolate pocket.

The protein belongs to the TRAFAC class TrmE-Era-EngA-EngB-Septin-like GTPase superfamily. TrmE GTPase family. Homodimer. Heterotetramer of two MnmE and two MnmG subunits. Requires K(+) as cofactor.

It localises to the cytoplasm. Exhibits a very high intrinsic GTPase hydrolysis rate. Involved in the addition of a carboxymethylaminomethyl (cmnm) group at the wobble position (U34) of certain tRNAs, forming tRNA-cmnm(5)s(2)U34. The sequence is that of tRNA modification GTPase MnmE from Rickettsia felis (strain ATCC VR-1525 / URRWXCal2) (Rickettsia azadi).